Here is a 208-residue protein sequence, read N- to C-terminus: FMN-dependent NADH:quinone oxidoreductase (208 aa).

FMN contacts are provided by residues 17-19, 99-102, and 143-146; these read SNS, MWNL, and SRGG.

The protein belongs to the azoreductase type 1 family. Homodimer. Requires FMN as cofactor.

It catalyses the reaction 2 a quinone + NADH + H(+) = 2 a 1,4-benzosemiquinone + NAD(+). It carries out the reaction N,N-dimethyl-1,4-phenylenediamine + anthranilate + 2 NAD(+) = 2-(4-dimethylaminophenyl)diazenylbenzoate + 2 NADH + 2 H(+). Functionally, quinone reductase that provides resistance to thiol-specific stress caused by electrophilic quinones. Also exhibits azoreductase activity. Catalyzes the reductive cleavage of the azo bond in aromatic azo compounds to the corresponding amines. This chain is FMN-dependent NADH:quinone oxidoreductase, found in Staphylococcus haemolyticus (strain JCSC1435).